The primary structure comprises 336 residues: Filaggrin (336 aa).

The tract at residues 1–313 is disordered; that stretch reads PDGSGRSSNR…GVQGAAASGQ (313 aa). 3 stretches are compositionally biased toward low complexity: residues 16-26, 40-66, and 73-98; these read QLSPSQSSDSQ, SSSANRRAGSSSGSGVQGASAGGLAAD, and ARQGQASAQGRAGSQGQAQGRVSSSA. 3 stretches are compositionally biased toward basic and acidic residues: residues 100 to 120, 163 to 176, and 184 to 195; these read RQGRRGVSESRASDSEGHSDF, DSQHQHGHQHEQQR, and HQHEHEQPESGH. Low complexity predominate over residues 285–311; the sequence is AQRGQSSSANRRAGSSSGSGVQGAAAS.

It belongs to the S100-fused protein family. Filaggrin is initially synthesized as a large, insoluble, highly phosphorylated precursor containing many tandem copies of 248 AA, which are not separated by large linker sequences. During terminal differentiation it is dephosphorylated and proteolytically cleaved. As to expression, expressed in the granular layer of the epidermis (at protein level). Expressed in the epidermis of the ear (at protein level).

Its subcellular location is the cytoplasmic granule. Aggregates keratin intermediate filaments and promotes disulfide-bond formation among the intermediate filaments during terminal differentiation of mammalian epidermis. This Mus musculus (Mouse) protein is Filaggrin (Flg).